The sequence spans 117 residues: Immunoglobulin lambda variable 1-51 (117 aa).

A signal peptide spans 1–19 (MTCSPLLLTLLIHCTGSWA). Gln20 bears the Pyrrolidone carboxylic acid mark. Positions 20 to 44 (QSVLTQPPSVSAAPGQKVTISCSGS) are framework-1. The region spanning 20-117 (QSVLTQPPSV…CGTWDSSLSA (98 aa)) is the Ig-like domain. Residues Cys41 and Cys108 are joined by a disulfide bond. Positions 45–52 (SSNIGNNY) are complementarity-determining-1. The framework-2 stretch occupies residues 53-69 (VSWYQQLPGTAPKLLIY). The complementarity-determining-2 stretch occupies residues 70 to 72 (DNN). A framework-3 region spans residues 73 to 108 (KRPSGIPDRFSGSKSGTSATLGITGLQTGDEADYYC). The complementarity-determining-3 stretch occupies residues 109–117 (GTWDSSLSA).

Immunoglobulins are composed of two identical heavy chains and two identical light chains; disulfide-linked.

It localises to the secreted. It is found in the cell membrane. Its function is as follows. V region of the variable domain of immunoglobulin light chains that participates in the antigen recognition. Immunoglobulins, also known as antibodies, are membrane-bound or secreted glycoproteins produced by B lymphocytes. In the recognition phase of humoral immunity, the membrane-bound immunoglobulins serve as receptors which, upon binding of a specific antigen, trigger the clonal expansion and differentiation of B lymphocytes into immunoglobulins-secreting plasma cells. Secreted immunoglobulins mediate the effector phase of humoral immunity, which results in the elimination of bound antigens. The antigen binding site is formed by the variable domain of one heavy chain, together with that of its associated light chain. Thus, each immunoglobulin has two antigen binding sites with remarkable affinity for a particular antigen. The variable domains are assembled by a process called V-(D)-J rearrangement and can then be subjected to somatic hypermutations which, after exposure to antigen and selection, allow affinity maturation for a particular antigen. This is Immunoglobulin lambda variable 1-51 from Homo sapiens (Human).